Here is a 392-residue protein sequence, read N- to C-terminus: 2-oxoisovalerate dehydrogenase subunit beta, mitochondrial (392 aa).

Residues 1 to 50 (MAAVAAFAGWLLRLRAAGADGPWRRLCGAGLSRGFLQSASAYGAAAQRRQ) constitute a mitochondrion transit peptide. Tyrosine 152 contacts thiamine diphosphate. K(+) is bound by residues glycine 178, leucine 180, threonine 181, cysteine 228, and aspartate 231. Lysine 232 bears the N6-acetyllysine mark. Asparagine 233 is a K(+) binding site. N6-acetyllysine is present on lysine 241.

In terms of assembly, heterotetramer of 2 alpha/BCKDHA and 2 beta chains/BCKDHB that forms the branched-chain alpha-keto acid decarboxylase (E1) component of the BCKD complex. The branched-chain alpha-ketoacid dehydrogenase is a large complex composed of three major building blocks E1, E2 and E3. It is organized around E2, a 24-meric cubic core composed of DBT, to which are associated 6 to 12 copies of E1, and approximately 6 copies of the dehydrogenase E3, a DLD dimer. The cofactor is thiamine diphosphate.

The protein resides in the mitochondrion matrix. The catalysed reaction is N(6)-[(R)-lipoyl]-L-lysyl-[protein] + 3-methyl-2-oxobutanoate + H(+) = N(6)-[(R)-S(8)-2-methylpropanoyldihydrolipoyl]-L-lysyl-[protein] + CO2. Its function is as follows. Together with BCKDHA forms the heterotetrameric E1 subunit of the mitochondrial branched-chain alpha-ketoacid dehydrogenase (BCKD) complex. The BCKD complex catalyzes the multi-step oxidative decarboxylation of alpha-ketoacids derived from the branched-chain amino-acids valine, leucine and isoleucine producing CO2 and acyl-CoA which is subsequently utilized to produce energy. The E1 subunit catalyzes the first step with the decarboxylation of the alpha-ketoacid forming an enzyme-product intermediate. A reductive acylation mediated by the lipoylamide cofactor of E2 extracts the acyl group from the E1 active site for the next step of the reaction. This Bos taurus (Bovine) protein is 2-oxoisovalerate dehydrogenase subunit beta, mitochondrial (BCKDHB).